A 720-amino-acid chain; its full sequence is Phosphatase and actin regulator 4 (720 aa).

Positions 1–48 are disordered; sequence MGQPRFSRPVHPAAAAEEVDHPPSDAGMGVDVLESGDTTPPTKRKSKF. The stretch at 74-99 is one RPEL 1 repeat; sequence EVLERKISMRKPREELVKRGVLLEDP. 3 disordered regions span residues 294-417, 454-568, and 610-648; these read SGTG…GLPR, NDGF…DTLA, and RPTA…LSQR. Residues 346 to 368 are compositionally biased toward pro residues; it reads TYPPPSPSPPLPTHIPPEPPRMP. Residues 393–405 are compositionally biased toward basic and acidic residues; the sequence is KDFRSLEVSKRTA. 3 stretches are compositionally biased toward acidic residues: residues 481-494, 521-534, and 542-551; these read DDEE…EEEQ, EEQE…DSDS, and DDEEDEEEDE. RPEL repeat units lie at residues 601–626 and 639–664; these read TTLI…QPKN and RRLT…RFNE. The span at 626 to 636 shows a compositional bias: basic and acidic residues; it reads NEADRQAEKRE. Basic residues predominate over residues 637-646; it reads IKRRLTRKLS.

This sequence belongs to the phosphatase and actin regulator family. As to quaternary structure, binds PPP1CA and actin.

It localises to the cytoplasm. The protein resides in the cell projection. The protein localises to the lamellipodium. Regulator of protein phosphatase 1 (PP1) required for neural tube and optic fissure closure, and enteric neural crest cell (ENCCs) migration during development. Acts as an activator of PP1. During neural tube closure, localizes to the ventral neural tube and activates PP1, leading to down-regulate cell proliferation within cranial neural tissue and the neural retina. Also acts as a regulator of migration of enteric neural crest cells (ENCCs) by activating PP1, leading to repression of the integrin signaling through the RHO/ROCK pathway. This Gallus gallus (Chicken) protein is Phosphatase and actin regulator 4 (PHACTR4).